The sequence spans 1045 residues: Extracellular serine protease (1045 aa).

The N-terminal stretch at 1–27 is a signal peptide; the sequence is MILNKRLKLAYCVFLGCYGLSIHSSLA. One can recognise a Peptidase S8 domain in the interval 49 to 397; sequence QWGLEAISAE…WGRVNLRDAI (349 aa). Active-site charge relay system residues include Asp76, His112, and Ser341. The propeptide at 646–1045 is translocator domain; removed in mature form; that stretch reads SLASTENEKA…SVNAGLTWRF (400 aa). The region spanning 769-1045 is the Autotransporter domain; sequence IKADDNGAWA…SVNAGLTWRF (277 aa).

The protein belongs to the peptidase S8 family.

Its subcellular location is the secreted. The chain is Extracellular serine protease from Serratia marcescens.